The chain runs to 500 residues: 4-aminobutyrate aminotransferase, mitochondrial (500 aa).

The transit peptide at 1-28 (MASMLVAQRLACSFQHSYRLLVPGSRHI) directs the protein to the mitochondrion. Cysteine 163 provides a ligand contact to [2Fe-2S] cluster. 164–165 (GS) provides a ligand contact to pyridoxal 5'-phosphate. Residue cysteine 166 participates in [2Fe-2S] cluster binding. Residue arginine 220 coordinates substrate. An N6-succinyllysine modification is found at lysine 231. Lysine 252 bears the N6-acetyllysine; alternate mark. At lysine 252 the chain carries N6-succinyllysine; alternate. N6-acetyllysine is present on residues lysine 279 and lysine 318. An N6-(pyridoxal phosphate)lysine modification is found at lysine 357. Residue threonine 381 coordinates pyridoxal 5'-phosphate. At lysine 413 the chain carries N6-acetyllysine; alternate. The residue at position 413 (lysine 413) is an N6-succinyllysine; alternate. 2 positions are modified to N6-acetyllysine: lysine 452 and lysine 470.

Belongs to the class-III pyridoxal-phosphate-dependent aminotransferase family. Homodimer; disulfide-linked. Pyridoxal 5'-phosphate is required as a cofactor. It depends on [2Fe-2S] cluster as a cofactor.

The protein localises to the mitochondrion matrix. The catalysed reaction is 4-aminobutanoate + 2-oxoglutarate = succinate semialdehyde + L-glutamate. It catalyses the reaction (S)-3-amino-2-methylpropanoate + 2-oxoglutarate = 2-methyl-3-oxopropanoate + L-glutamate. In terms of biological role, catalyzes the conversion of gamma-aminobutyrate and L-beta-aminoisobutyrate to succinate semialdehyde and methylmalonate semialdehyde, respectively. Can also convert delta-aminovalerate and beta-alanine. This is 4-aminobutyrate aminotransferase, mitochondrial (ABAT) from Bos taurus (Bovine).